The following is an 883-amino-acid chain: Receptor-like protein 40 (883 aa).

The signal sequence occupies residues 1-21 (MSELLFSLNFLLLLLLSCVSP). Over 22–846 (SSFFTFNNPV…EDEQVLNWKA (825 aa)) the chain is Extracellular. Residues Asn58, Asn91, and Asn109 are each glycosylated (N-linked (GlcNAc...) asparagine). 2 LRR repeats span residues 97–121 (FHHLRSLLLPHNNFTSSSISSKFGM) and 122–143 (LNNLEVLSLSSSGFLAQVPFSF). Asn145 is a glycosylation site (N-linked (GlcNAc...) asparagine). 14 LRR repeats span residues 146–169 (LSMLSALVLSNNDLTGSLSFARNL), 170–195 (RKLRVLDVSYNHFSGILNPNSSLFEL), 197–219 (HIIYLNLRYNNFTSSSLPYEFGN), 220–244 (LNKLEVLDVSSNSFFGQVPPTISNL), 246–267 (QLTELYLPLNHFTGSLPLVQNL), 268–291 (TKLSILHLFGNHFSGTIPSSLFTM), 293–316 (FLSYLSLKGNNLNGSIEVPNSSSS), 317–340 (SRLESLHLGENHFEGKILEPISKL), 342–364 (NLKELDLSFLNTSYPIDLSLFSS), 365–390 (LKSLLLLDLSGDWISKASLTLDSYIP), 391–412 (STLEVLRLEHCDISDFPNVFKT), 413–437 (LHNLEYIALSNNRISGKFPEWLWSL), 439–462 (RLSSVFITDNLLTGFEGSSEVLVN), and 463–486 (SSVQILSLDTNSLEGALPHLPLSI). Residues Asn189, Asn207, Asn243, and Asn266 are each glycosylated (N-linked (GlcNAc...) asparagine). Residues Asn305 and Asn312 are each glycosylated (N-linked (GlcNAc...) asparagine). Asn352 carries an N-linked (GlcNAc...) asparagine glycan. Asn462 is a glycosylation site (N-linked (GlcNAc...) asparagine). One copy of the LRR 17; degenerate repeat lies at 487 to 506 (NYFSAIDNRFGGDIPLSICN). N-linked (GlcNAc...) asparagine glycosylation is found at Asn506 and Asn519. LRR repeat units lie at residues 507-528 (RSSLDVLDLSYNNFTGPIPPCL), 529-552 (SNLLYLKLRKNNLEGSIPDKYYED), 554-576 (PLRSLDVGYNRLTGKLPRSLINC), 578-600 (ALQFLSVDHNGIKDTFPFSLKAL), 601-624 (PKLQVLLLSSNKFYGPLSPPNEGP), 627-651 (FPELRILEIAGNKLTGSLSSDFFVN), 701-724 (TSSATIDFSGNRLEGEIPESIGLL), 725-747 (KALIALNLSNNAFTGHIPLSFAN), 748-772 (LKKMESLDLSSNQLSGTIPNGLRTL), and 774-797 (FLAYVNVSHNQLIGEIPQGTQITG). A glycan (N-linked (GlcNAc...) asparagine) is linked at Asn575. The N-linked (GlcNAc...) asparagine glycan is linked to Asn731. Asn779 carries an N-linked (GlcNAc...) asparagine glycan. A helical membrane pass occupies residues 847-867 (VAIGYGIGVLLGLAIAQLISL). The Cytoplasmic portion of the chain corresponds to 868–883 (YKPKWLASLVIKSRNC).

It belongs to the RLP family.

The protein resides in the cell membrane. The chain is Receptor-like protein 40 from Arabidopsis thaliana (Mouse-ear cress).